A 565-amino-acid chain; its full sequence is Oxygen-dependent choline dehydrogenase (565 aa).

7–36 (DYIICGAGSAGNVLATRLTEDPGVTVLLLE) serves as a coordination point for FAD. His-474 functions as the Proton acceptor in the catalytic mechanism.

This sequence belongs to the GMC oxidoreductase family. FAD is required as a cofactor.

The enzyme catalyses choline + A = betaine aldehyde + AH2. The catalysed reaction is betaine aldehyde + NAD(+) + H2O = glycine betaine + NADH + 2 H(+). It functions in the pathway amine and polyamine biosynthesis; betaine biosynthesis via choline pathway; betaine aldehyde from choline (cytochrome c reductase route): step 1/1. Its function is as follows. Involved in the biosynthesis of the osmoprotectant glycine betaine. Catalyzes the oxidation of choline to betaine aldehyde and betaine aldehyde to glycine betaine at the same rate. This is Oxygen-dependent choline dehydrogenase from Burkholderia mallei (strain ATCC 23344).